Here is a 677-residue protein sequence, read N- to C-terminus: Zinc finger protein 526 (677 aa).

C2H2-type zinc fingers lie at residues 57 to 79, 109 to 131, and 141 to 164; these read FMCSECGNLYNTLEEVLSHQEQH, FQCGECSQLILSPRELLAHQDAH, and YQCGDCQELFPSPELWVAHRKAQH. Positions 167-190 are disordered; it reads TAAAKPPVPPPLPPVTPPPPPPAP. Over residues 172–190 the composition is skewed to pro residues; it reads PPVPPPLPPVTPPPPPPAP. Residues 198–220 form a C2H2-type 4 zinc finger; it reads YECPECSTLCTTPEEFLEHQGTH. Positions 223 to 232 are enriched in basic and acidic residues; the sequence is SLEKEEHNGL. The segment at 223–300 is disordered; sequence SLEKEEHNGL…RRASHGPASA (78 aa). Residues 233–257 are compositionally biased toward acidic residues; that stretch reads EEEEEDDEDDNEETEEEEEAAAEVG. 4 consecutive C2H2-type zinc fingers follow at residues 304-326, 331-353, 359-381, and 387-408; these read FYCSQCQRSFSSANRLLAHGRAH, HECTTCSKVFKKAASLEQHLRLH, YLCVDCGRGFGTELTLVAHRRAH, and HRCRCGKTFSNMTKFLYHRRTH. A disordered region spans residues 408–449; that stretch reads HAGKSGAPPSAAPPTVASAVASLAPAEPTPPPPAPPTPPAQL. Positions 410-433 are enriched in low complexity; sequence GKSGAPPSAAPPTVASAVASLAPA. The segment covering 434-449 has biased composition (pro residues); sequence EPTPPPPAPPTPPAQL. C2H2-type zinc fingers lie at residues 449–472, 479–501, 507–529, 535–557, and 580–602; these read LPCPQCPKSFASASRLSRHRRAVH, HRCGVCGKGFKKLVHVRNHLRTH, FQCHACGKTFASLANLSRHQLTH, YQCLDCGKRFTQSSNLQQHRRLH, and YYCGTCGRWFRAMAGLRLHQRVH. The disordered stretch occupies residues 608–627; sequence LTLQPPRSPPPAPPPPPEPQ. Pro residues predominate over residues 613 to 626; that stretch reads PRSPPPAPPPPPEP.

Belongs to the krueppel C2H2-type zinc-finger protein family.

It is found in the nucleus. May be involved in transcriptional regulation. This chain is Zinc finger protein 526 (ZNF526), found in Bos taurus (Bovine).